The sequence spans 80 residues: NAD(P)H-quinone oxidoreductase subunit O (80 aa).

This sequence belongs to the complex I NdhO subunit family. As to quaternary structure, NDH-1 can be composed of about 15 different subunits; different subcomplexes with different compositions have been identified which probably have different functions.

The protein resides in the cellular thylakoid membrane. It carries out the reaction a plastoquinone + NADH + (n+1) H(+)(in) = a plastoquinol + NAD(+) + n H(+)(out). The enzyme catalyses a plastoquinone + NADPH + (n+1) H(+)(in) = a plastoquinol + NADP(+) + n H(+)(out). Functionally, NDH-1 shuttles electrons from an unknown electron donor, via FMN and iron-sulfur (Fe-S) centers, to quinones in the respiratory and/or the photosynthetic chain. The immediate electron acceptor for the enzyme in this species is believed to be plastoquinone. Couples the redox reaction to proton translocation, and thus conserves the redox energy in a proton gradient. Cyanobacterial NDH-1 also plays a role in inorganic carbon-concentration. In Prochlorococcus marinus subsp. pastoris (strain CCMP1986 / NIES-2087 / MED4), this protein is NAD(P)H-quinone oxidoreductase subunit O.